The chain runs to 320 residues: Acetyl-coenzyme A carboxylase carboxyl transferase subunit alpha (320 aa).

Positions I42 to D295 constitute a CoA carboxyltransferase C-terminal domain.

It belongs to the AccA family. In terms of assembly, acetyl-CoA carboxylase is a heterohexamer composed of biotin carboxyl carrier protein (AccB), biotin carboxylase (AccC) and two subunits each of ACCase subunit alpha (AccA) and ACCase subunit beta (AccD).

It localises to the cytoplasm. The enzyme catalyses N(6)-carboxybiotinyl-L-lysyl-[protein] + acetyl-CoA = N(6)-biotinyl-L-lysyl-[protein] + malonyl-CoA. It participates in lipid metabolism; malonyl-CoA biosynthesis; malonyl-CoA from acetyl-CoA: step 1/1. Component of the acetyl coenzyme A carboxylase (ACC) complex. First, biotin carboxylase catalyzes the carboxylation of biotin on its carrier protein (BCCP) and then the CO(2) group is transferred by the carboxyltransferase to acetyl-CoA to form malonyl-CoA. This Rhodopseudomonas palustris (strain BisA53) protein is Acetyl-coenzyme A carboxylase carboxyl transferase subunit alpha.